We begin with the raw amino-acid sequence, 465 residues long: Glutamate--tRNA ligase (465 aa).

Positions 8–18 (PSPTGHLHIGG) match the 'HIGH' region motif. Zn(2+) contacts are provided by C97, C99, C124, and E126. Positions 234–238 (RLSKR) match the 'KMSKS' region motif. K237 is an ATP binding site.

It belongs to the class-I aminoacyl-tRNA synthetase family. Glutamate--tRNA ligase type 1 subfamily. Monomer. Requires Zn(2+) as cofactor.

The protein localises to the cytoplasm. The enzyme catalyses tRNA(Glu) + L-glutamate + ATP = L-glutamyl-tRNA(Glu) + AMP + diphosphate. In terms of biological role, catalyzes the attachment of glutamate to tRNA(Glu) in a two-step reaction: glutamate is first activated by ATP to form Glu-AMP and then transferred to the acceptor end of tRNA(Glu). This is Glutamate--tRNA ligase from Thermodesulfovibrio yellowstonii (strain ATCC 51303 / DSM 11347 / YP87).